Here is a 200-residue protein sequence, read N- to C-terminus: dITP/XTP pyrophosphatase (200 aa).

7-12 is a binding site for substrate; that stretch reads SNNRGK. Asp68 serves as the catalytic Proton acceptor. Mg(2+) is bound at residue Asp68. Substrate contacts are provided by residues Ala69, 154–157, Lys177, and 182–183; these read FGFD and HR.

Belongs to the HAM1 NTPase family. In terms of assembly, homodimer. Mg(2+) is required as a cofactor.

The enzyme catalyses XTP + H2O = XMP + diphosphate + H(+). The catalysed reaction is dITP + H2O = dIMP + diphosphate + H(+). It catalyses the reaction ITP + H2O = IMP + diphosphate + H(+). Functionally, pyrophosphatase that catalyzes the hydrolysis of nucleoside triphosphates to their monophosphate derivatives, with a high preference for the non-canonical purine nucleotides XTP (xanthosine triphosphate), dITP (deoxyinosine triphosphate) and ITP. Seems to function as a house-cleaning enzyme that removes non-canonical purine nucleotides from the nucleotide pool, thus preventing their incorporation into DNA/RNA and avoiding chromosomal lesions. This is dITP/XTP pyrophosphatase from Delftia acidovorans (strain DSM 14801 / SPH-1).